Consider the following 327-residue polypeptide: Thiosulfate dehydrogenase (327 aa).

Positions 1 to 26 (MKIIPYRKRSVLIATIFAISAVGITG) are cleaved as a signal peptide. Residues 66–78 (NDMTATAGGTDTA) show a composition bias toward low complexity. The segment at 66–93 (NDMTATAGGTDTASGKPTIKMPDESTIP) is disordered. 2 consecutive Cytochrome c domains span residues 99 to 196 (AAVR…SWLS) and 219 to 305 (PNTD…THLP). C125, C128, H129, C232, C235, and H236 together coordinate heme c.

Monomer. Post-translationally, binds 2 heme c groups covalently per subunit.

The protein localises to the periplasm. The catalysed reaction is 2 thiosulfate + 2 Fe(III)-[cytochrome c] = tetrathionate + 2 Fe(II)-[cytochrome c] + 2 H(+). Its function is as follows. Catalyzes the oxidation of 2 molecules of thiosulfate to tetrathionate. The sequence is that of Thiosulfate dehydrogenase (tsdA) from Psychrobacter arcticus (strain DSM 17307 / VKM B-2377 / 273-4).